The sequence spans 309 residues: Tagatose-6-phosphate kinase (309 aa).

Belongs to the carbohydrate kinase PfkB family. LacC subfamily.

The catalysed reaction is D-tagatofuranose 6-phosphate + ATP = D-tagatofuranose 1,6-bisphosphate + ADP + H(+). Its pathway is carbohydrate metabolism; D-tagatose 6-phosphate degradation; D-glyceraldehyde 3-phosphate and glycerone phosphate from D-tagatose 6-phosphate: step 1/2. The polypeptide is Tagatose-6-phosphate kinase (Streptococcus pyogenes serotype M6 (strain ATCC BAA-946 / MGAS10394)).